Reading from the N-terminus, the 201-residue chain is Recombination protein RecR (201 aa).

A C4-type zinc finger spans residues 60–75; the sequence is CKTCGNIDTQNPCTVC. The 96-residue stretch at 83–178 folds into the Toprim domain; it reads AIIVVVADVA…KVTRLAHGVP (96 aa).

It belongs to the RecR family.

In terms of biological role, may play a role in DNA repair. It seems to be involved in an RecBC-independent recombinational process of DNA repair. It may act with RecF and RecO. The polypeptide is Recombination protein RecR (Rhodopseudomonas palustris (strain BisA53)).